The chain runs to 108 residues: Pyrimidine/purine nucleoside phosphorylase (108 aa).

The protein belongs to the nucleoside phosphorylase PpnP family.

It catalyses the reaction a purine D-ribonucleoside + phosphate = a purine nucleobase + alpha-D-ribose 1-phosphate. The catalysed reaction is adenosine + phosphate = alpha-D-ribose 1-phosphate + adenine. The enzyme catalyses cytidine + phosphate = cytosine + alpha-D-ribose 1-phosphate. It carries out the reaction guanosine + phosphate = alpha-D-ribose 1-phosphate + guanine. It catalyses the reaction inosine + phosphate = alpha-D-ribose 1-phosphate + hypoxanthine. The catalysed reaction is thymidine + phosphate = 2-deoxy-alpha-D-ribose 1-phosphate + thymine. The enzyme catalyses uridine + phosphate = alpha-D-ribose 1-phosphate + uracil. It carries out the reaction xanthosine + phosphate = alpha-D-ribose 1-phosphate + xanthine. Its function is as follows. Catalyzes the phosphorolysis of diverse nucleosides, yielding D-ribose 1-phosphate and the respective free bases. Can use uridine, adenosine, guanosine, cytidine, thymidine, inosine and xanthosine as substrates. Also catalyzes the reverse reactions. The polypeptide is Pyrimidine/purine nucleoside phosphorylase (Acinetobacter baumannii (strain AB307-0294)).